A 362-amino-acid chain; its full sequence is Dual-specificity RNA methyltransferase RlmN (362 aa).

Glutamate 100 acts as the Proton acceptor in catalysis. One can recognise a Radical SAM core domain in the interval 106-345 (EPDRNTLCIS…VFIRNSRGED (240 aa)). Cysteine 113 and cysteine 350 are joined by a disulfide. Positions 120, 124, and 127 each coordinate [4Fe-4S] cluster. S-adenosyl-L-methionine is bound by residues 177–178 (GE), serine 209, 231–233 (SLH), and asparagine 307. Cysteine 350 functions as the S-methylcysteine intermediate in the catalytic mechanism.

It belongs to the radical SAM superfamily. RlmN family. [4Fe-4S] cluster serves as cofactor.

It localises to the cytoplasm. The catalysed reaction is adenosine(2503) in 23S rRNA + 2 reduced [2Fe-2S]-[ferredoxin] + 2 S-adenosyl-L-methionine = 2-methyladenosine(2503) in 23S rRNA + 5'-deoxyadenosine + L-methionine + 2 oxidized [2Fe-2S]-[ferredoxin] + S-adenosyl-L-homocysteine. The enzyme catalyses adenosine(37) in tRNA + 2 reduced [2Fe-2S]-[ferredoxin] + 2 S-adenosyl-L-methionine = 2-methyladenosine(37) in tRNA + 5'-deoxyadenosine + L-methionine + 2 oxidized [2Fe-2S]-[ferredoxin] + S-adenosyl-L-homocysteine. Functionally, specifically methylates position 2 of adenine 2503 in 23S rRNA and position 2 of adenine 37 in tRNAs. m2A2503 modification seems to play a crucial role in the proofreading step occurring at the peptidyl transferase center and thus would serve to optimize ribosomal fidelity. The polypeptide is Dual-specificity RNA methyltransferase RlmN (Desulfotalea psychrophila (strain LSv54 / DSM 12343)).